Here is a 956-residue protein sequence, read N- to C-terminus: Valine--tRNA ligase (956 aa).

The 'HIGH' region signature appears at 69-79 (PNITGVLHMGH). Residues 566–570 (KMSKS) carry the 'KMSKS' region motif. Lys569 serves as a coordination point for ATP. Residues 885–911 (LCARLQKAWQKARQKVQQVERKLADAQ) adopt a coiled-coil conformation.

Belongs to the class-I aminoacyl-tRNA synthetase family. ValS type 1 subfamily. Monomer.

It localises to the cytoplasm. The catalysed reaction is tRNA(Val) + L-valine + ATP = L-valyl-tRNA(Val) + AMP + diphosphate. Its function is as follows. Catalyzes the attachment of valine to tRNA(Val). As ValRS can inadvertently accommodate and process structurally similar amino acids such as threonine, to avoid such errors, it has a 'posttransfer' editing activity that hydrolyzes mischarged Thr-tRNA(Val) in a tRNA-dependent manner. The chain is Valine--tRNA ligase from Treponema pallidum (strain Nichols).